Here is a 152-residue protein sequence, read N- to C-terminus: MFRGASAINLDTKGRIAIPVRYREPLQLEHQGRIVITVDIQSACLLLYPLHEWELIEAKLLKLSDTDKTQRSLKRMLLGYAHEVELDGNGRILLPPPLRQYANLDKRIMLVGQLNKFELWDEQAWLQQIDECQETIRSEELANNERLADFSL.

2 SpoVT-AbrB domains span residues 5 to 52 and 81 to 124; these read ASAI…PLHE and AHEV…DEQA.

This sequence belongs to the MraZ family. In terms of assembly, forms oligomers.

It localises to the cytoplasm. It is found in the nucleoid. In Shewanella sp. (strain MR-7), this protein is Transcriptional regulator MraZ.